The sequence spans 716 residues: Putative cuticle collagen 99 (716 aa).

Disordered stretches follow at residues 85-122 (LPSS…PVGP) and 183-472 (PPGP…SLVA). Triple-helical region stretches follow at residues 179 to 238 (GMPG…KGDR), 265 to 298 (LPGP…FDGE), and 302 to 330 (GPKG…EKGD). Residues 266-277 (PGPPGPPGPPGP) are compositionally biased toward pro residues. The span at 280–290 (RDGRHGLKGDR) shows a compositional bias: basic and acidic residues. The segment covering 349–358 (PGPPGPPGPP) has biased composition (pro residues). 2 triple-helical region regions span residues 385 to 411 (GPPG…AGAA) and 422 to 467 (GPPG…GRHG). Basic and acidic residues predominate over residues 389-401 (EKGERGERGEPGD). Residues 402-422 (RGLPGAAGAANLLNGGKALVG) are compositionally biased toward low complexity. Basic and acidic residues predominate over residues 429–444 (RDGRPGDKGEKGEQGL). The N-linked (GlcNAc...) asparagine glycan is linked to Asn-474. Residues 503–716 (KNVIPGPPGP…GAETRPPVTD (214 aa)) are disordered. Triple-helical region regions lie at residues 507-557 (PGPP…QPGA), 566-603 (GPRG…PPGP), and 605-664 (GLRG…PGLD). Over residues 568–577 (RGPPGLPGPP) the composition is skewed to pro residues.

The protein belongs to the cuticular collagen family. Collagen polypeptide chains are complexed within the cuticle by disulfide bonds and other types of covalent cross-links.

Its function is as follows. Nematode cuticles are composed largely of collagen-like proteins. The cuticle functions both as an exoskeleton and as a barrier to protect the worm from its environment. The protein is Putative cuticle collagen 99 (col-99) of Caenorhabditis elegans.